A 365-amino-acid chain; its full sequence is Transcription elongation factor, mitochondrial (365 aa).

A mitochondrion-targeting transit peptide spans 1-40 (MAWRANLACLIKAGGRTRWFPLPEYLSMSPVLHNTCSRRK).

The protein belongs to the TEFM family. Interacts with POLRMT.

Its subcellular location is the mitochondrion matrix. The protein resides in the mitochondrion nucleoid. Transcription elongation factor which increases mitochondrial RNA polymerase processivity. Regulates transcription of the mitochondrial genome, including genes important for the oxidative phosphorylation machinery. In Rattus norvegicus (Rat), this protein is Transcription elongation factor, mitochondrial (Tefm).